A 502-amino-acid polypeptide reads, in one-letter code: Glycerol kinase (502 aa).

Position 14 (threonine 14) interacts with ADP. Threonine 14, threonine 15, and serine 16 together coordinate ATP. A sn-glycerol 3-phosphate-binding site is contributed by threonine 14. Arginine 18 serves as a coordination point for ADP. Sn-glycerol 3-phosphate is bound by residues arginine 84, glutamate 85, and tyrosine 136. The glycerol site is built by arginine 84, glutamate 85, and tyrosine 136. Histidine 232 is subject to Phosphohistidine; by HPr. Aspartate 246 contributes to the sn-glycerol 3-phosphate binding site. Positions 246 and 247 each coordinate glycerol. ADP is bound by residues threonine 268 and glycine 311. 4 residues coordinate ATP: threonine 268, glycine 311, glutamine 315, and glycine 412. ADP-binding residues include glycine 412 and asparagine 416.

This sequence belongs to the FGGY kinase family. As to quaternary structure, homotetramer and homodimer (in equilibrium). The phosphoenolpyruvate-dependent sugar phosphotransferase system (PTS), including enzyme I, and histidine-containing protein (HPr) are required for the phosphorylation, which leads to the activation of the enzyme.

It carries out the reaction glycerol + ATP = sn-glycerol 3-phosphate + ADP + H(+). It functions in the pathway polyol metabolism; glycerol degradation via glycerol kinase pathway; sn-glycerol 3-phosphate from glycerol: step 1/1. With respect to regulation, activated by phosphorylation and inhibited by fructose 1,6-bisphosphate (FBP). Key enzyme in the regulation of glycerol uptake and metabolism. Catalyzes the phosphorylation of glycerol to yield sn-glycerol 3-phosphate. The sequence is that of Glycerol kinase from Streptococcus pneumoniae serotype 19F (strain G54).